The chain runs to 311 residues: N-acetylmuramic acid 6-phosphate etherase (311 aa).

The 165-residue stretch at 66 to 230 (VVEAFEADGR…TTAAMVRLGK (165 aa)) folds into the SIS domain. Glutamate 94 serves as the catalytic Proton donor. Glutamate 125 is an active-site residue.

The protein belongs to the GCKR-like family. MurNAc-6-P etherase subfamily. In terms of assembly, homodimer.

The enzyme catalyses N-acetyl-D-muramate 6-phosphate + H2O = N-acetyl-D-glucosamine 6-phosphate + (R)-lactate. The protein operates within amino-sugar metabolism; N-acetylmuramate degradation. In terms of biological role, specifically catalyzes the cleavage of the D-lactyl ether substituent of MurNAc 6-phosphate, producing GlcNAc 6-phosphate and D-lactate. The sequence is that of N-acetylmuramic acid 6-phosphate etherase from Salinibacter ruber (strain DSM 13855 / M31).